The primary structure comprises 246 residues: Pyridoxine 5'-phosphate synthase (246 aa).

3-amino-2-oxopropyl phosphate-binding residues include asparagine 8 and arginine 19. Histidine 44 acts as the Proton acceptor in catalysis. 2 residues coordinate 1-deoxy-D-xylulose 5-phosphate: arginine 46 and histidine 51. Glutamate 76 functions as the Proton acceptor in the catalytic mechanism. Threonine 106 serves as a coordination point for 1-deoxy-D-xylulose 5-phosphate. Catalysis depends on histidine 198, which acts as the Proton donor. 3-amino-2-oxopropyl phosphate is bound by residues aspartate 199 and 221 to 222 (GH).

The protein belongs to the PNP synthase family. As to quaternary structure, homooctamer; tetramer of dimers.

Its subcellular location is the cytoplasm. It carries out the reaction 3-amino-2-oxopropyl phosphate + 1-deoxy-D-xylulose 5-phosphate = pyridoxine 5'-phosphate + phosphate + 2 H2O + H(+). Its pathway is cofactor biosynthesis; pyridoxine 5'-phosphate biosynthesis; pyridoxine 5'-phosphate from D-erythrose 4-phosphate: step 5/5. Its function is as follows. Catalyzes the complicated ring closure reaction between the two acyclic compounds 1-deoxy-D-xylulose-5-phosphate (DXP) and 3-amino-2-oxopropyl phosphate (1-amino-acetone-3-phosphate or AAP) to form pyridoxine 5'-phosphate (PNP) and inorganic phosphate. The protein is Pyridoxine 5'-phosphate synthase of Brucella suis (strain ATCC 23445 / NCTC 10510).